The following is a 600-amino-acid chain: Alanine--tRNA ligase (600 aa).

Zn(2+) contacts are provided by histidine 463, histidine 467, cysteine 565, and histidine 569.

Belongs to the class-II aminoacyl-tRNA synthetase family. Zn(2+) is required as a cofactor.

The protein localises to the cytoplasm. The enzyme catalyses tRNA(Ala) + L-alanine + ATP = L-alanyl-tRNA(Ala) + AMP + diphosphate. Functionally, catalyzes the attachment of alanine to tRNA(Ala) in a two-step reaction: alanine is first activated by ATP to form Ala-AMP and then transferred to the acceptor end of tRNA(Ala). Also edits incorrectly charged Ser-tRNA(Ala) and Gly-tRNA(Ala) via its editing domain. This is Alanine--tRNA ligase (alaS) from Treponema denticola (strain ATCC 35405 / DSM 14222 / CIP 103919 / JCM 8153 / KCTC 15104).